We begin with the raw amino-acid sequence, 624 residues long: tRNA uridine 5-carboxymethylaminomethyl modification enzyme MnmG (624 aa).

FAD contacts are provided by residues 13–18 (GGGHAG), Val-125, and Ser-180. 273 to 287 (GPRYCPSIEDKIVRF) serves as a coordination point for NAD(+). An FAD-binding site is contributed by Gln-370.

It belongs to the MnmG family. Homodimer. Heterotetramer of two MnmE and two MnmG subunits. FAD is required as a cofactor.

It is found in the cytoplasm. Functionally, NAD-binding protein involved in the addition of a carboxymethylaminomethyl (cmnm) group at the wobble position (U34) of certain tRNAs, forming tRNA-cmnm(5)s(2)U34. The sequence is that of tRNA uridine 5-carboxymethylaminomethyl modification enzyme MnmG from Legionella pneumophila (strain Corby).